The chain runs to 514 residues: 1-pyrroline-5-carboxylate dehydrogenase (514 aa).

Active-site residues include Glu286 and Cys320.

The protein belongs to the aldehyde dehydrogenase family. RocA subfamily.

The catalysed reaction is L-glutamate 5-semialdehyde + NAD(+) + H2O = L-glutamate + NADH + 2 H(+). Its pathway is amino-acid degradation; L-proline degradation into L-glutamate; L-glutamate from L-proline: step 2/2. The sequence is that of 1-pyrroline-5-carboxylate dehydrogenase from Staphylococcus saprophyticus subsp. saprophyticus (strain ATCC 15305 / DSM 20229 / NCIMB 8711 / NCTC 7292 / S-41).